The following is a 335-amino-acid chain: Homeobox protein Hox-A1 (335 aa).

Residues I61 to Y80 are disordered. Basic residues predominate over residues P64 to P75. Positions P75–Q203 are interaction with OGT. Residues T204–K209 carry the Antp-type hexapeptide motif. The segment at residues P229–E288 is a DNA-binding region (homeobox). Positions R281 to H335 are disordered. The span at N303–E312 shows a compositional bias: basic and acidic residues. Residues K313 to S328 are compositionally biased toward low complexity.

This sequence belongs to the Antp homeobox family. Labial subfamily. As to quaternary structure, interacts with OGT (via TPR repeats domain); the interaction takes place mainly in the nucleus. Forms a DNA-binding heterodimer with transcription factor PBX1.

Its subcellular location is the nucleus. Sequence-specific transcription factor. Regulates multiple developmental processes including brainstem, inner and outer ear, abducens nerve and cardiovascular development and morphogenesis as well as cognition and behavior. Also part of a developmental regulatory system that provides cells with specific positional identities on the anterior-posterior axis. Acts on the anterior body structures. Seems to act in the maintenance and/or generation of hindbrain segments. Activates transcription in the presence of PBX1A and PKNOX1. The protein is Homeobox protein Hox-A1 (HOXA1) of Homo sapiens (Human).